A 2339-amino-acid chain; its full sequence is Inverse autotransporter adhesin YeeJ (2339 aa).

The first 26 residues, 1 to 26 (MGIKLRRLTAGICLITQLAFPMAAAA), serve as a signal peptide directing secretion. In terms of domain architecture, LysM spans 50 to 98 (VPYTLGALESAQSVAERFGISVAELRKLNQFRTFARGFDNVRQGDELDV). An inverse autotransporter region spans residues 125–400 (TSQQIGSLLA…SRYDLVDRNN (276 aa)). Residues 513-605 (QKDSSVSLST…GVDAAKAPAV (93 aa)) form an invasin 3 domain region. Big-1 domains lie at 721 to 815 (IATL…VSFV), 822 to 913 (QVDL…VNFI), 920 to 1017 (ALTL…MTFV), 1024 to 1121 (VVVL…VTFV), 1128 to 1221 (QVVL…VHFI), 1229 to 1331 (IIEL…SINV), 1339 to 1432 (HLTL…VTYV), 1439 to 1535 (EITL…VNFI), 1542 to 1639 (QVNL…VTLI), 1646 to 1730 (KLAS…PTEV), 1746 to 1837 (ITSL…LEAI), 1840 to 1934 (KLTL…VKVT), and 1942 to 2034 (VASF…ITLV). Residues 2236 to 2339 (KSWWVNAGEA…FAYATCYKNL (104 aa)) form a C-type lectin domain region.

It belongs to the intimin/invasin family.

The protein localises to the cell outer membrane. A cryptic inverse autotransporter, it is not expressed in wild-type strain MG1655. Upon overexpression shows increased adherence to polyvinyl chloride (PVC) plates and increased mature biofilm formation. Probably binds peptidoglycan. This Escherichia coli (strain K12) protein is Inverse autotransporter adhesin YeeJ (yeeJ).